Reading from the N-terminus, the 388-residue chain is Na(+)/H(+) antiporter NhaA (388 aa).

Transmembrane regions (helical) follow at residues 13 to 33 (AAGG…ANTP), 36 to 56 (GIYH…LEIA), 59 to 79 (LLLW…GLEV), 95 to 115 (VFPA…YLMF), 125 to 145 (GWAI…ALLG), 154 to 174 (VFLL…IALF), 179 to 199 (VSMA…FMNW), 213 to 233 (LVLW…GVII), 259 to 279 (VAFL…LQGV), 287 to 307 (LLPV…IFTF), 328 to 348 (VFAV…IASL), and 363 to 383 (LGIL…LRMS).

Belongs to the NhaA Na(+)/H(+) (TC 2.A.33) antiporter family.

It localises to the cell inner membrane. It carries out the reaction Na(+)(in) + 2 H(+)(out) = Na(+)(out) + 2 H(+)(in). In terms of biological role, na(+)/H(+) antiporter that extrudes sodium in exchange for external protons. This chain is Na(+)/H(+) antiporter NhaA, found in Serratia proteamaculans (strain 568).